The sequence spans 278 residues: Indole-3-glycerol phosphate synthase (278 aa).

It belongs to the TrpC family.

The catalysed reaction is 1-(2-carboxyphenylamino)-1-deoxy-D-ribulose 5-phosphate + H(+) = (1S,2R)-1-C-(indol-3-yl)glycerol 3-phosphate + CO2 + H2O. The protein operates within amino-acid biosynthesis; L-tryptophan biosynthesis; L-tryptophan from chorismate: step 4/5. The sequence is that of Indole-3-glycerol phosphate synthase from Pseudomonas aeruginosa (strain UCBPP-PA14).